A 150-amino-acid polypeptide reads, in one-letter code: Ribonuclease H (150 aa).

An RNase H type-1 domain is found at 1 to 141 (MKSIEVHTDG…VDVLARNQAI (141 aa)). Mg(2+) is bound by residues Asp-9, Glu-47, Asp-69, and Asp-133.

It belongs to the RNase H family. Monomer. Requires Mg(2+) as cofactor.

It is found in the cytoplasm. It carries out the reaction Endonucleolytic cleavage to 5'-phosphomonoester.. Endonuclease that specifically degrades the RNA of RNA-DNA hybrids. This chain is Ribonuclease H, found in Xanthomonas axonopodis pv. citri (strain 306).